The following is a 190-amino-acid chain: Shikimate kinase (190 aa).

Residue 19–24 participates in ATP binding; it reads GSGKTT. Residue T23 coordinates Mg(2+). Substrate is bound by residues D41, R65, and G87. R124 serves as a coordination point for ATP. R143 serves as a coordination point for substrate.

It belongs to the shikimate kinase family. As to quaternary structure, monomer. It depends on Mg(2+) as a cofactor.

It localises to the cytoplasm. The enzyme catalyses shikimate + ATP = 3-phosphoshikimate + ADP + H(+). Its pathway is metabolic intermediate biosynthesis; chorismate biosynthesis; chorismate from D-erythrose 4-phosphate and phosphoenolpyruvate: step 5/7. In terms of biological role, catalyzes the specific phosphorylation of the 3-hydroxyl group of shikimic acid using ATP as a cosubstrate. This chain is Shikimate kinase, found in Synechococcus sp. (strain ATCC 27144 / PCC 6301 / SAUG 1402/1) (Anacystis nidulans).